Here is a 730-residue protein sequence, read N- to C-terminus: Catalase-peroxidase (730 aa).

The disordered stretch occupies residues 1–21; that stretch reads MTENKCPVTGKMSKATAGSGT. Residues 95–218 constitute a cross-link (tryptophyl-tyrosyl-methioninium (Trp-Tyr) (with M-244)); the sequence is WHSAGTYRVG…LAAVQMGLIY (124 aa). The Proton acceptor role is filled by histidine 96. A cross-link (tryptophyl-tyrosyl-methioninium (Tyr-Met) (with W-95)) is located at residues 218–244; that stretch reads YVNPEGPNGNPDPLGSAHDVRETFARM. Histidine 259 is a binding site for heme b.

The protein belongs to the peroxidase family. Peroxidase/catalase subfamily. As to quaternary structure, homodimer or homotetramer. It depends on heme b as a cofactor. In terms of processing, formation of the three residue Trp-Tyr-Met cross-link is important for the catalase, but not the peroxidase activity of the enzyme.

The enzyme catalyses H2O2 + AH2 = A + 2 H2O. The catalysed reaction is 2 H2O2 = O2 + 2 H2O. Its function is as follows. Bifunctional enzyme with both catalase and broad-spectrum peroxidase activity. The polypeptide is Catalase-peroxidase (Clostridium botulinum (strain Alaska E43 / Type E3)).